Reading from the N-terminus, the 280-residue chain is Pantothenate synthetase (280 aa).

Position 30–37 (30–37 (MGYLHEGH)) interacts with ATP. H37 acts as the Proton donor in catalysis. Q61 contributes to the (R)-pantoate binding site. Q61 is a beta-alanine binding site. Residue 147–150 (GQKD) participates in ATP binding. Position 153 (Q153) interacts with (R)-pantoate. ATP is bound by residues V176 and 184 to 187 (MSSR).

The protein belongs to the pantothenate synthetase family. As to quaternary structure, homodimer.

It is found in the cytoplasm. It catalyses the reaction (R)-pantoate + beta-alanine + ATP = (R)-pantothenate + AMP + diphosphate + H(+). It functions in the pathway cofactor biosynthesis; (R)-pantothenate biosynthesis; (R)-pantothenate from (R)-pantoate and beta-alanine: step 1/1. Catalyzes the condensation of pantoate with beta-alanine in an ATP-dependent reaction via a pantoyl-adenylate intermediate. This chain is Pantothenate synthetase, found in Thermotoga petrophila (strain ATCC BAA-488 / DSM 13995 / JCM 10881 / RKU-1).